The chain runs to 213 residues: Phosphoribosyl-dephospho-CoA transferase (213 aa).

Residues Asp135 and Asp137 contribute to the active site.

Belongs to the MdcG family.

It catalyses the reaction apo-[malonate decarboxylase ACP] + 2'-(5''-triphospho-alpha-D-ribosyl)-3'-dephospho-CoA = holo-[malonate decarboxylase ACP] + diphosphate. In terms of biological role, transfers 2'-(5-triphosphoribosyl)-3'-dephosphocoenzyme-A to the apo-[acyl-carrier-protein] of the malonate decarboxylase to yield holo-[acyl-carrier-protein]. In Xanthomonas euvesicatoria pv. vesicatoria (strain 85-10) (Xanthomonas campestris pv. vesicatoria), this protein is Phosphoribosyl-dephospho-CoA transferase.